The following is a 342-amino-acid chain: D-alanine--D-alanine ligase (342 aa).

In terms of domain architecture, ATP-grasp spans 132-326; that stretch reads KLYAKECGIE…VAKHLPKSKN (195 aa). 159–210 is an ATP binding site; sequence EYPVIIKPNHLGSSIGVSVVYDSSELEYALDVAFEFDDEVLIEPFIEGIEEY. 3 residues coordinate Mg(2+): Asp-282, Glu-294, and Asn-296.

Belongs to the D-alanine--D-alanine ligase family. Mg(2+) is required as a cofactor. It depends on Mn(2+) as a cofactor.

It localises to the cytoplasm. The catalysed reaction is 2 D-alanine + ATP = D-alanyl-D-alanine + ADP + phosphate + H(+). The protein operates within cell wall biogenesis; peptidoglycan biosynthesis. Cell wall formation. In Nitratiruptor sp. (strain SB155-2), this protein is D-alanine--D-alanine ligase.